The following is a 79-amino-acid chain: UPF0180 protein BCAH187_A1552 (79 aa).

The protein belongs to the UPF0180 family.

This chain is UPF0180 protein BCAH187_A1552, found in Bacillus cereus (strain AH187).